The following is a 452-amino-acid chain: Pup--protein ligase 1 (452 aa).

Glu-9 serves as a coordination point for Mg(2+). Arg-53 contacts ATP. Tyr-55 serves as a coordination point for Mg(2+). Catalysis depends on Asp-57, which acts as the Proton acceptor. Position 63 (Glu-63) interacts with Mg(2+). The ATP site is built by Thr-66 and Trp-419.

The protein belongs to the Pup ligase/Pup deamidase family. Pup-conjugating enzyme subfamily.

The enzyme catalyses ATP + [prokaryotic ubiquitin-like protein]-L-glutamate + [protein]-L-lysine = ADP + phosphate + N(6)-([prokaryotic ubiquitin-like protein]-gamma-L-glutamyl)-[protein]-L-lysine.. It functions in the pathway protein degradation; proteasomal Pup-dependent pathway. The protein operates within protein modification; protein pupylation. Its function is as follows. Catalyzes the covalent attachment of the prokaryotic ubiquitin-like protein modifier Pup to the proteasomal substrate proteins, thereby targeting them for proteasomal degradation. This tagging system is termed pupylation. The ligation reaction involves the side-chain carboxylate of the C-terminal glutamate of Pup and the side-chain amino group of a substrate lysine. The chain is Pup--protein ligase 1 from Rhodococcus erythropolis (Arthrobacter picolinophilus).